We begin with the raw amino-acid sequence, 981 residues long: MTMPLPSIEQTLIQLADNLITHFPEQFNSQIYQQIQKDISNIKTPVGALMRAVSMSDFVTEILQKQPHFLAECWHKTPQLADCDSYAARLSVQLADIREETGLYKTLRDFRNQEMAKLSICQSLNSATVEEIFIRLSQLAEALIIGARDWLYQRACLDWGTPTDNQGNVQQLYILGMGKLGGFELNFSSDIDLIFTYPANGETVGSRKPIDNQKFFTRLGQRLISALDEFTEDGFVYRTDMRLRPFGDSGALALSFNAMESYYQEQGRDWERYAMIKGRILGADEQDPNVKTLRQLLRPFIYRRYIDFSVIQSLRDMKSKIEREVLRRGLVDNIKLGAGGIREIEFIVQVFQLIRGGREISLQQHELLKLLPEIEKLNLITADQHQDLLQAYLFLRRVENVLQAINDKQTQLLPADELNRCRLISATCEFTQWDNNHRPQKIQYPIHDWESFYQVLQQHQQKVRSVFNNLIGFNNENEADDSDNAWSDFLDADLEQGEIADILAQQGVSEEERDEIIGRLEAFRHSVSHRSIGIRGREVLTQLMPLLLLQIFSNKKYRTLLPRMLNIVEKILTRTTYLELLLENPQALTQLIELCAKSQLIAEQVAQHPILLDELLDREALLNPPSFEQYPAELQQYLLRLPEDDDEQFITALRQFKQATLLRIAAADILGALPVMKVSDHLTFLAETILHTVVNLAWQQITARFGKPEHLQNNEKGFLVAGYGKLGGIELGYRSDLDLVFLCDEIHSGQTVGGKKVIDSHQFYLRLAQKIISIFSMTTSAGILYEVDLRLRPSGEAGPLCCSFKAFEDYQMNEAWTWEKQSLVRSRAVYGEPALREKFELIRTGILASPRDLTQLKIDVREMREKMYRHFAGADDNKFNIKKDQGGITDIEFIAQYLVLAHAPENPNLAYWSDNVRIFDIMAEHGIITLNEAEKLKNCYTGLRNQIHHLNLLGEPPIVSKEEFADERRFIHQIWQKLFFE.

The segment at 1-473 (MTMPLPSIEQ…RSVFNNLIGF (473 aa)) is adenylyl removase. The interval 479–981 (ADDSDNAWSD…HQIWQKLFFE (503 aa)) is adenylyl transferase.

Belongs to the GlnE family. The cofactor is Mg(2+).

It carries out the reaction [glutamine synthetase]-O(4)-(5'-adenylyl)-L-tyrosine + phosphate = [glutamine synthetase]-L-tyrosine + ADP. The catalysed reaction is [glutamine synthetase]-L-tyrosine + ATP = [glutamine synthetase]-O(4)-(5'-adenylyl)-L-tyrosine + diphosphate. Functionally, involved in the regulation of glutamine synthetase GlnA, a key enzyme in the process to assimilate ammonia. When cellular nitrogen levels are high, the C-terminal adenylyl transferase (AT) inactivates GlnA by covalent transfer of an adenylyl group from ATP to specific tyrosine residue of GlnA, thus reducing its activity. Conversely, when nitrogen levels are low, the N-terminal adenylyl removase (AR) activates GlnA by removing the adenylyl group by phosphorolysis, increasing its activity. The regulatory region of GlnE binds the signal transduction protein PII (GlnB) which indicates the nitrogen status of the cell. The protein is Bifunctional glutamine synthetase adenylyltransferase/adenylyl-removing enzyme of Mannheimia succiniciproducens (strain KCTC 0769BP / MBEL55E).